Here is a 180-residue protein sequence, read N- to C-terminus: Outer membrane protein YfaZ (180 aa).

The signal sequence occupies residues 1-21; sequence MKKIALAGLAGMLLVSASVNA.

The protein resides in the cell outer membrane. This chain is Outer membrane protein YfaZ (yfaZ), found in Escherichia coli (strain K12).